Here is a 251-residue protein sequence, read N- to C-terminus: Triosephosphate isomerase (251 aa).

Position 9–11 (9–11 (NWK)) interacts with substrate. Histidine 95 functions as the Electrophile in the catalytic mechanism. Catalysis depends on glutamate 167, which acts as the Proton acceptor. Residues glycine 173, serine 212, and 233–234 (GG) each bind substrate.

It belongs to the triosephosphate isomerase family. As to quaternary structure, homodimer.

It localises to the cytoplasm. It catalyses the reaction D-glyceraldehyde 3-phosphate = dihydroxyacetone phosphate. It functions in the pathway carbohydrate biosynthesis; gluconeogenesis. Its pathway is carbohydrate degradation; glycolysis; D-glyceraldehyde 3-phosphate from glycerone phosphate: step 1/1. In terms of biological role, involved in the gluconeogenesis. Catalyzes stereospecifically the conversion of dihydroxyacetone phosphate (DHAP) to D-glyceraldehyde-3-phosphate (G3P). The protein is Triosephosphate isomerase of Pseudomonas paraeruginosa (strain DSM 24068 / PA7) (Pseudomonas aeruginosa (strain PA7)).